The primary structure comprises 240 residues: ATP-dependent dethiobiotin synthetase BioD (240 aa).

Position 13–18 (13–18) interacts with ATP; the sequence is GVGKTI. Threonine 17 contributes to the Mg(2+) binding site. Residue lysine 38 is part of the active site. Threonine 42 serves as a coordination point for substrate. Residues aspartate 55, 116-119, and 214-216 each bind ATP; these read EGVG and PYL. Positions 55 and 116 each coordinate Mg(2+).

It belongs to the dethiobiotin synthetase family. As to quaternary structure, homodimer. It depends on Mg(2+) as a cofactor.

Its subcellular location is the cytoplasm. The catalysed reaction is (7R,8S)-7,8-diammoniononanoate + CO2 + ATP = (4R,5S)-dethiobiotin + ADP + phosphate + 3 H(+). The protein operates within cofactor biosynthesis; biotin biosynthesis; biotin from 7,8-diaminononanoate: step 1/2. In terms of biological role, catalyzes a mechanistically unusual reaction, the ATP-dependent insertion of CO2 between the N7 and N8 nitrogen atoms of 7,8-diaminopelargonic acid (DAPA, also called 7,8-diammoniononanoate) to form a ureido ring. The polypeptide is ATP-dependent dethiobiotin synthetase BioD (Thermodesulfovibrio yellowstonii (strain ATCC 51303 / DSM 11347 / YP87)).